Here is a 527-residue protein sequence, read N- to C-terminus: PTS system maltose-specific EIICB component (527 aa).

In terms of domain architecture, PTS EIIC type-1 spans 1–418 (MMQKIQRFGS…FNIATPGREK (418 aa)). Helical transmembrane passes span 8 to 28 (FGSA…IVGI), 59 to 79 (GWTV…VALA), 93 to 113 (VYLT…GAFG), 132 to 152 (IKTL…VVFL), 173 to 193 (YIVM…SYIW), 200 to 220 (IGSL…IYTF), 224 to 244 (ILIP…GPAV), 276 to 296 (FALH…AFYV), 305 to 325 (LVAG…ITEP), 326 to 346 (IEFT…VLAA), 357 to 377 (VVGN…IPLF), and 382 to 402 (MTYV…FFVF). Positions 449–527 (DDTAFLYIEA…RERVEKILNQ (79 aa)) constitute a PTS EIIB type-1 domain. Cys-471 (phosphocysteine intermediate; for EIIB activity) is an active-site residue.

The protein localises to the cell membrane. The catalysed reaction is D-maltose(out) + N(pros)-phospho-L-histidyl-[protein] = alpha-maltose 6'-phosphate(in) + L-histidyl-[protein]. The phosphoenolpyruvate-dependent sugar phosphotransferase system (sugar PTS), a major carbohydrate active transport system, catalyzes the phosphorylation of incoming sugar substrates concomitantly with their translocation across the cell membrane. This system is involved in maltose transport. The protein is PTS system maltose-specific EIICB component of Bacillus subtilis (strain 168).